The following is a 527-amino-acid chain: Putative WEB family protein At4g17210 (527 aa).

Disordered regions lie at residues 1 to 28 and 46 to 70; these read MAKI…IDTR and FSKK…TDVS. Positions 55–68 are enriched in low complexity; sequence SSSSSSQSQDTTTD. 3 coiled-coil regions span residues 95 to 159, 202 to 389, and 436 to 513; these read AAKA…YILI, SNKI…AKHM, and KKIR…EAHS.

It belongs to the WEB family.

The protein is Putative WEB family protein At4g17210 of Arabidopsis thaliana (Mouse-ear cress).